The sequence spans 947 residues: Serine-aspartate repeat-containing protein C (947 aa).

Positions 1–50 are cleaved as a signal peptide; that stretch reads MNNKKTATNRKGMIPNRLNKFSIRKYSVGTASILVGTTLIFGLSGHEAKA. Residues 51–164 form a disordered region; that stretch reads AEHTNGELNQ…STTPKTTTIK (114 aa). Positions 51–495 are ligand binding A region; the sequence is AEHTNGELNQ…GSSTANGDQK (445 aa). A compositionally biased stretch (polar residues) spans 56–71; it reads GELNQSKNETTAPSEN. Positions 72–83 are enriched in basic and acidic residues; it reads KTTKKVDSRQLK. Over residues 84–155 the composition is skewed to polar residues; that stretch reads DNTQTATADQ…SNLTQAKDVS (72 aa). 2 consecutive CNA-B domains span residues 496-606 and 607-717; these read KYNL…YKTP and KYSL…EEET. Residues 678 to 927 are disordered; that stretch reads TQTGTNTTED…NNSNNGTLFG (250 aa). 2 stretches are compositionally biased toward acidic residues: residues 685–695 and 712–886; these read TEDDKDADGGE and YYEE…DSDS. The LPXTG sorting signal signature appears at 910–914; that stretch reads LPETG. The span at 912 to 927 shows a compositional bias: low complexity; sequence ETGSENNNSNNGTLFG. Thr-913 is subject to Pentaglycyl murein peptidoglycan amidated threonine. Positions 914–947 are cleaved as a propeptide — removed by sortase; it reads GSENNNSNNGTLFGGLFAALGSLLLFGRRKKQNK.

This sequence belongs to the serine-aspartate repeat-containing protein (SDr) family. Homodimerizes; via N2-Domain. Interacts with host NRXN1; this interaction mediates bacterial attachment to host cells.

The protein localises to the secreted. It localises to the cell wall. In terms of biological role, cell surface-associated calcium-binding protein which plays an important role in adhesion and pathogenesis. Mediates interactions with components of the extracellular matrix such as host NRXN1 to promote bacterial adhesion. The protein is Serine-aspartate repeat-containing protein C (sdrC) of Staphylococcus aureus (strain USA300).